The primary structure comprises 395 residues: L-rhamnonate dehydratase (395 aa).

Residues histidine 23 and arginine 49 each contribute to the substrate site. Mg(2+)-binding residues include aspartate 215, glutamate 241, and glutamate 269. The active-site Proton acceptor is the histidine 319. Glutamate 339 contacts substrate.

Belongs to the mandelate racemase/muconate lactonizing enzyme family. RhamD subfamily. In terms of assembly, homooctamer; tetramer of dimers. Mg(2+) is required as a cofactor.

It catalyses the reaction L-rhamnonate = 2-dehydro-3-deoxy-L-rhamnonate + H2O. In terms of biological role, catalyzes the dehydration of L-rhamnonate to 2-keto-3-deoxy-L-rhamnonate (KDR). The chain is L-rhamnonate dehydratase (rhmD) from Polaromonas sp. (strain JS666 / ATCC BAA-500).